A 470-amino-acid chain; its full sequence is Neuronal acetylcholine receptor subunit beta-4 (470 aa).

A signal peptide spans Ser1 to Ala3. Topologically, residues Ala4–Thr216 are extracellular. N-linked (GlcNAc...) asparagine glycans are attached at residues Asn29, Asn118, and Asn146. A disulfide bridge links Cys133 with Cys147. Residues Ile217–Pro237 traverse the membrane as a helical segment. Residues Ser238–Thr245 lie on the Cytoplasmic side of the membrane. Glu242 contacts Na(+). The chain crosses the membrane as a helical span at residues Leu246–Pro266. Over Pro267–Tyr278 the chain is Extracellular. A helical membrane pass occupies residues Leu279–Val299. Topologically, residues His300–Arg438 are cytoplasmic. A helical transmembrane segment spans residues Leu439–Pro459. The Extracellular portion of the chain corresponds to Leu460–Pro470.

It belongs to the ligand-gated ion channel (TC 1.A.9) family. Acetylcholine receptor (TC 1.A.9.1) subfamily. Beta-4/CHRNB4 sub-subfamily. As to quaternary structure, neuronal AChR is composed of two different types of subunits: alpha and beta. CHRNB4/Beta-4 subunit can be combined to CHRNA2/alpha-2, CHRNA3/alpha-3 or CHRNA4/alpha-4, CHRNA5/alpha-5 and CHRNB3/beta-3 to give rise to functional receptors.

It is found in the synaptic cell membrane. It localises to the cell membrane. It carries out the reaction Ca(2+)(in) = Ca(2+)(out). It catalyses the reaction K(+)(in) = K(+)(out). The enzyme catalyses Na(+)(in) = Na(+)(out). Activated by a myriad of ligands such as acetylcholine, cytisine, nicotine, choline and epibatidine. The heteropentamer CHRNA3:CHRNB4 activity is blocked by the alpha-conotoxin ImI and AuIB. Its function is as follows. Component of neuronal acetylcholine receptors (nAChRs) that function as pentameric, ligand-gated cation channels with high calcium permeability among other activities. nAChRs are excitatory neurotrasnmitter receptors formed by a collection of nAChR subunits known to mediate synaptic transmission in the nervous system and the neuromuscular junction. Each nAchR subunit confers differential attributes to channel properties, including activation, deactivation and desensitization kinetics, pH sensitivity, cation permeability, and binding to allosteric modulators. CHRNB4 forms heteropentameric neuronal acetylcholine receptors with CHRNA2, CHRNA3 and CHRNA4, as well as CHRNA5 and CHRNB3 as accesory subunits. CHRNA3:CHRNB4 being predominant in neurons of the autonomic ganglia, it is known as ganglionic nicotinic receptor. CHRNA3:CHRNB4 or CHRNA3:CHRNA5:CHRNB4 play also an important role in the habenulo-interpeduncular tract, modulating the mesolimbic dopamine system and affecting reward circuits and addiction. Hypothalamic CHRNA3:CHRNB4 nAChR activation by nicotine leads to activation of POMC neurons and a decrease in food intake. In Gallus gallus (Chicken), this protein is Neuronal acetylcholine receptor subunit beta-4 (CHRNB4).